A 766-amino-acid polypeptide reads, in one-letter code: Dipeptidyl peptidase 4 (766 aa).

Residues 1 to 6 (MKTPWK) lie on the Cytoplasmic side of the membrane. Residues 7–28 (VLLGLLGAAALVTIITVPVVLL) traverse the membrane as a helical; Signal-anchor for type II membrane protein segment. The Extracellular portion of the chain corresponds to 29–766 (NKGTDDATAD…HFIKQCFSLP (738 aa)). Residues N85, N92, N150, N219, N229, N281, and N321 are each glycosylated (N-linked (GlcNAc...) asparagine). Cystine bridges form between C328–C339, C385–C394, C444–C447, and C454–C472. An N-linked (GlcNAc...) asparagine glycan is attached at N520. The Charge relay system role is filled by S630. An intrachain disulfide couples C649 to C762. Residue N685 is glycosylated (N-linked (GlcNAc...) asparagine). Residues D708 and H740 each act as charge relay system in the active site.

This sequence belongs to the peptidase S9B family. DPPIV subfamily. In terms of assembly, monomer. Homodimer. Heterodimer with Seprase (FAP). Requires homodimerization for optimal dipeptidyl peptidase activity and T-cell costimulation. Found in a membrane raft complex, at least composed of BCL10, CARD11, DPP4 and IKBKB. Associates with collagen. Interacts with PTPRC; the interaction is enhanced in an interleukin-12-dependent manner in activated lymphocytes. Interacts (via extracellular domain) with ADA; does not inhibit its dipeptidyl peptidase activity. Interacts with CAV1 (via the N-terminus); the interaction is direct. Interacts (via cytoplasmic tail) with CARD11 (via PDZ domain); its homodimerization is necessary for interaction with CARD11. Interacts with IGF2R; the interaction is direct. Interacts with GPC3. Interacts with human coronavirus-EMC spike protein and acts as a receptor for this virus. As to quaternary structure, (Microbial infection) Interacts with MERS coronavirus/MERS-CoV spike protein. The soluble form (Dipeptidyl peptidase 4 soluble form also named SDPP) derives from the membrane form (Dipeptidyl peptidase 4 membrane form also named MDPP) by proteolytic processing. In terms of processing, N- and O-Glycosylated. Post-translationally, phosphorylated. Mannose 6-phosphate residues in the carbohydrate moiety are necessary for interaction with IGF2R in activated T-cells. Mannose 6-phosphorylation is induced during T-cell activation. In terms of tissue distribution, expressed specifically in lymphatic vessels but not in blood vessels in the skin, small intestine, esophagus, ovary, breast and prostate glands. Not detected in lymphatic vessels in the lung, kidney, uterus, liver and stomach (at protein level). Expressed in the poorly differentiated crypt cells of the small intestine as well as in the mature villous cells. Expressed at very low levels in the colon.

The protein resides in the secreted. It is found in the cell membrane. The protein localises to the apical cell membrane. It localises to the cell projection. Its subcellular location is the invadopodium membrane. The protein resides in the lamellipodium membrane. It is found in the cell junction. The protein localises to the membrane raft. It catalyses the reaction Release of an N-terminal dipeptide, Xaa-Yaa-|-Zaa-, from a polypeptide, preferentially when Yaa is Pro, provided Zaa is neither Pro nor hydroxyproline.. Inhibited by GPC3 and diprotin A. In terms of biological role, cell surface glycoprotein receptor involved in the costimulatory signal essential for T-cell receptor (TCR)-mediated T-cell activation. Acts as a positive regulator of T-cell coactivation, by binding at least ADA, CAV1, IGF2R, and PTPRC. Its binding to CAV1 and CARD11 induces T-cell proliferation and NF-kappa-B activation in a T-cell receptor/CD3-dependent manner. Its interaction with ADA also regulates lymphocyte-epithelial cell adhesion. In association with FAP is involved in the pericellular proteolysis of the extracellular matrix (ECM), the migration and invasion of endothelial cells into the ECM. May be involved in the promotion of lymphatic endothelial cells adhesion, migration and tube formation. When overexpressed, enhanced cell proliferation, a process inhibited by GPC3. Also acts as a serine exopeptidase with a dipeptidyl peptidase activity that regulates various physiological processes by cleaving peptides in the circulation, including many chemokines, mitogenic growth factors, neuropeptides and peptide hormones such as brain natriuretic peptide 32. Removes N-terminal dipeptides sequentially from polypeptides having unsubstituted N-termini provided that the penultimate residue is proline. Functionally, (Microbial infection) Acts as a receptor for human coronavirus MERS-CoV-2. The protein is Dipeptidyl peptidase 4 of Homo sapiens (Human).